A 106-amino-acid chain; its full sequence is Large ribosomal subunit protein uL24 (106 aa).

It belongs to the universal ribosomal protein uL24 family. Part of the 50S ribosomal subunit.

Functionally, one of two assembly initiator proteins, it binds directly to the 5'-end of the 23S rRNA, where it nucleates assembly of the 50S subunit. In terms of biological role, one of the proteins that surrounds the polypeptide exit tunnel on the outside of the subunit. This Marinobacter nauticus (strain ATCC 700491 / DSM 11845 / VT8) (Marinobacter aquaeolei) protein is Large ribosomal subunit protein uL24.